The chain runs to 125 residues: Protein ApaG (125 aa).

The ApaG domain occupies 1-125 (MINAPRVCVQ…FRLAIPSLIH (125 aa)).

The protein is Protein ApaG of Pectobacterium carotovorum subsp. carotovorum (strain PC1).